Reading from the N-terminus, the 299-residue chain is Trans-aconitate 3-methyltransferase (299 aa).

Ser-2 is subject to N-acetylserine.

This sequence belongs to the methyltransferase superfamily. Tam family.

Its subcellular location is the cytoplasm. The enzyme catalyses trans-aconitate + S-adenosyl-L-methionine = (E)-2-(methoxycarbonylmethyl)but-2-enedioate + S-adenosyl-L-homocysteine. Functionally, catalyzes the S-adenosylmethionine monomethyl esterification of trans-aconitate and 3-isopropylmalate at high affinity and of other molecules like cis-aconitate, isocitrate, and citrate at lower velocities and affinities. The function of trans-aconitate methylation appears to be in reducing the toxicity of this spontaneous breakdown product of cis-aconitate. The role of 3-isopropylmalate methylation is unclear but may represent a metabolic branch at 3-isopropylmalate, where some of the material is taken in the pathway leading to leucine and some is taken in a pathway to the 3-isopropylmalate methyl ester, a molecule that provides a signal to switch from vegetative to invasive growth in response to amino acid starvation. The sequence is that of Trans-aconitate 3-methyltransferase (TMT1) from Saccharomyces cerevisiae (strain ATCC 204508 / S288c) (Baker's yeast).